Here is a 155-residue protein sequence, read N- to C-terminus: Putative pre-16S rRNA nuclease (155 aa).

It belongs to the YqgF nuclease family.

Its subcellular location is the cytoplasm. Could be a nuclease involved in processing of the 5'-end of pre-16S rRNA. In Novosphingobium aromaticivorans (strain ATCC 700278 / DSM 12444 / CCUG 56034 / CIP 105152 / NBRC 16084 / F199), this protein is Putative pre-16S rRNA nuclease.